A 1641-amino-acid chain; its full sequence is Alpha-2-macroglobulin (1641 aa).

A signal peptide spans 1-31 (MRDRVAMMLRPLVRGWIPRAVLLLTVAFSFG). The N-palmitoyl cysteine moiety is linked to residue cysteine 32. Cysteine 32 carries the S-diacylglycerol cysteine lipid modification. A cross-link (isoglutamyl cysteine thioester (Cys-Gln)) is located at residues 1166 to 1169 (CAEQ).

Belongs to the protease inhibitor I39 (alpha-2-macroglobulin) family. Bacterial alpha-2-macroglobulin subfamily.

Its subcellular location is the cell membrane. Protects the bacterial cell from host peptidases. This chain is Alpha-2-macroglobulin, found in Xylella fastidiosa (strain 9a5c).